Here is a 407-residue protein sequence, read N- to C-terminus: Steroid 3-ketoacyl-CoA thiolase FadA6 (407 aa).

C110 (acyl-thioester intermediate) is an active-site residue. Residues Q178, 237-239 (RES), and S262 each bind CoA. Catalysis depends on proton acceptor residues H363 and C393. G395 is a binding site for substrate.

This sequence belongs to the thiolase-like superfamily. Thiolase family.

It catalyses the reaction an acyl-CoA + acetyl-CoA = a 3-oxoacyl-CoA + CoA. It carries out the reaction 6-methyl-3,7-dioxodecanedioyl-CoA + CoA = 4-methyl-5-oxo-octanedioyl-CoA + acetyl-CoA. It functions in the pathway steroid metabolism; cholesterol degradation. In terms of biological role, may be involved in the final steps of cholesterol and steroid degradation. Catalyzes the formation of 4-methyl-5-oxo-octanedioyl-CoA (MOODA-CoA) and acetyl-CoA from 6-methyl-3,7-dioxodecanedioyl-CoA (MeDODA-CoA) and coenzyme A. The polypeptide is Steroid 3-ketoacyl-CoA thiolase FadA6 (Mycobacterium tuberculosis (strain ATCC 25618 / H37Rv)).